A 235-amino-acid chain; its full sequence is Myb family transcription factor PHL12 (235 aa).

A compositionally biased stretch (basic and acidic residues) spans methionine 1–serine 12. The tract at residues methionine 1 to threonine 20 is disordered. The HTH myb-type domain occupies threonine 20 to glutamine 80. The H-T-H motif DNA-binding region spans proline 51 to arginine 76. The tract at residues arginine 119–glutamate 139 is coiled coil.

This sequence belongs to the MYB-CC family. Expressed in phloem and/or cambium.

It localises to the nucleus. This Arabidopsis thaliana (Mouse-ear cress) protein is Myb family transcription factor PHL12.